We begin with the raw amino-acid sequence, 130 residues long: Classical arabinogalactan protein 7 (130 aa).

Residues 1-21 (MNSKIIEAFFIVALFTTSCLA) form the signal peptide. Pyrrolidone carboxylic acid is present on Gln-22. The interval 22–108 (QAPAPSPTTT…DASAPPPNAA (87 aa)) is disordered. 4-hydroxyproline occurs at positions 24, 26, 28, 35, and 36. O-linked (Ara...) hydroxyproline glycans are attached at residues Pro-24, Pro-26, Pro-28, Pro-35, and Pro-36. Over residues 33-68 (TPPPVATPPPAATPAPTTTPPPAVSPAPTSSPPSSA) the composition is skewed to pro residues. Asn-106 carries GPI-anchor amidated asparagine lipidation. A propeptide spans 107 to 130 (AALTNKAFVVGSLVAAIIYAVVLA) (removed in mature form).

Belongs to the classical AGP family. O-glycosylated on hydroxyprolines; noncontiguous hydroxylproline residues are glycosylated with arabinogalactan.

Its subcellular location is the cell membrane. Its function is as follows. Proteoglycan that seems to be implicated in diverse developmental roles such as differentiation, cell-cell recognition, embryogenesis and programmed cell death. The chain is Classical arabinogalactan protein 7 (AGP7) from Arabidopsis thaliana (Mouse-ear cress).